A 196-amino-acid polypeptide reads, in one-letter code: C-type lectin domain family 2 member F (196 aa).

Residues 1-21 (MNAQCLKKPEEGESSPGTGDK) are disordered. Over 1–41 (MNAQCLKKPEEGESSPGTGDKILQRNSLRAISPESSAKLYC) the chain is Cytoplasmic. The helical; Signal-anchor for type II membrane protein transmembrane segment at 42–62 (CCGVIMVLTVAVVALSVALPA) threads the bilayer. The Extracellular portion of the chain corresponds to 63–196 (TKTEQILINK…SRSSNYMLQC (134 aa)). An intrachain disulfide couples Cys77 to Cys88. A C-type lectin domain is found at 84–187 (VGNKCFYFSE…DYIPRKWICS (104 aa)). Residue Asn97 is glycosylated (N-linked (GlcNAc...) asparagine). An intrachain disulfide couples Cys105 to Cys186.

It localises to the cell membrane. Lectin-type cell surface receptor. The sequence is that of C-type lectin domain family 2 member F (Clec2f) from Mus musculus (Mouse).